The primary structure comprises 158 residues: Nucleoside diphosphate kinase (158 aa).

Residues K16, F64, R92, T98, R109, and N119 each contribute to the ATP site. H122 (pros-phosphohistidine intermediate) is an active-site residue.

This sequence belongs to the NDK family. Mg(2+) is required as a cofactor.

The protein resides in the cytoplasm. The catalysed reaction is a 2'-deoxyribonucleoside 5'-diphosphate + ATP = a 2'-deoxyribonucleoside 5'-triphosphate + ADP. The enzyme catalyses a ribonucleoside 5'-diphosphate + ATP = a ribonucleoside 5'-triphosphate + ADP. Functionally, major role in the synthesis of nucleoside triphosphates other than ATP. The ATP gamma phosphate is transferred to the NDP beta phosphate via a ping-pong mechanism, using a phosphorylated active-site intermediate. The sequence is that of Nucleoside diphosphate kinase from Haloquadratum walsbyi (strain DSM 16790 / HBSQ001).